Consider the following 478-residue polypeptide: UDP-N-acetylmuramate--L-alanine ligase (478 aa).

Residue 112-118 (GTHGKTT) coordinates ATP.

The protein belongs to the MurCDEF family.

The protein resides in the cytoplasm. The enzyme catalyses UDP-N-acetyl-alpha-D-muramate + L-alanine + ATP = UDP-N-acetyl-alpha-D-muramoyl-L-alanine + ADP + phosphate + H(+). Its pathway is cell wall biogenesis; peptidoglycan biosynthesis. Cell wall formation. The protein is UDP-N-acetylmuramate--L-alanine ligase of Polaromonas naphthalenivorans (strain CJ2).